The primary structure comprises 255 residues: MSQEFLARILEQKAREVEQMKLEQIQPLRQTYRLAEFLKNHQDCLQVIAEVKKASPSLGDINLDVDIVQQAQTYEENGAVMISVLTDEVFFKGHLDYLREISSQVEIPTLNKDFIIDEKQIIRARNAGATVILLIVAALSEERLKELYDYATELGLEVLVETHNLAELEVAHRLGAEIIGVNNRNLTTFEVDLQTSVDLAPYFEEGRYYISESAIFTGQDAERLAPYFNGILVGTALMQAENVVQRIKELQIDKG.

It belongs to the TrpC family.

It carries out the reaction 1-(2-carboxyphenylamino)-1-deoxy-D-ribulose 5-phosphate + H(+) = (1S,2R)-1-C-(indol-3-yl)glycerol 3-phosphate + CO2 + H2O. Its pathway is amino-acid biosynthesis; L-tryptophan biosynthesis; L-tryptophan from chorismate: step 4/5. This chain is Indole-3-glycerol phosphate synthase, found in Streptococcus pneumoniae serotype 2 (strain D39 / NCTC 7466).